A 108-amino-acid polypeptide reads, in one-letter code: uncharacterized protein (108 aa).

Residues 1–12 show a composition bias toward polar residues; that stretch reads MSNQQKQLQLPS. The segment at 1-22 is disordered; the sequence is MSNQQKQLQLPSASIKKPKEKQ.

This is an uncharacterized protein from Dictyostelium discoideum (Social amoeba).